The sequence spans 270 residues: 4-hydroxy-tetrahydrodipicolinate reductase (270 aa).

NAD(+) contacts are provided by residues 8-13 (GALGRM), aspartate 34, 102-104 (GTT), and 128-131 (SQNY). Catalysis depends on histidine 160, which acts as the Proton donor/acceptor. Histidine 161 provides a ligand contact to (S)-2,3,4,5-tetrahydrodipicolinate. Lysine 164 functions as the Proton donor in the catalytic mechanism. 170 to 171 (GT) is a binding site for (S)-2,3,4,5-tetrahydrodipicolinate.

The protein belongs to the DapB family.

The protein localises to the cytoplasm. It carries out the reaction (S)-2,3,4,5-tetrahydrodipicolinate + NAD(+) + H2O = (2S,4S)-4-hydroxy-2,3,4,5-tetrahydrodipicolinate + NADH + H(+). The enzyme catalyses (S)-2,3,4,5-tetrahydrodipicolinate + NADP(+) + H2O = (2S,4S)-4-hydroxy-2,3,4,5-tetrahydrodipicolinate + NADPH + H(+). It functions in the pathway amino-acid biosynthesis; L-lysine biosynthesis via DAP pathway; (S)-tetrahydrodipicolinate from L-aspartate: step 4/4. Functionally, catalyzes the conversion of 4-hydroxy-tetrahydrodipicolinate (HTPA) to tetrahydrodipicolinate. The sequence is that of 4-hydroxy-tetrahydrodipicolinate reductase from Methanococcus vannielii (strain ATCC 35089 / DSM 1224 / JCM 13029 / OCM 148 / SB).